A 92-amino-acid chain; its full sequence is SPbeta prophage-derived uncharacterized protein YoqM (92 aa).

The signal sequence occupies residues 1-25; that stretch reads MKLRKVLTGSVLSLGLLVSASPAFA.

The protein is SPbeta prophage-derived uncharacterized protein YoqM (yoqM) of Bacillus subtilis (strain 168).